Reading from the N-terminus, the 458-residue chain is Chondroitin hydrolase (458 aa).

The first 22 residues, 1 to 22, serve as a signal peptide directing secretion; sequence MVIVWYHQLLLVLLIFIGAAKG. Positions 358–401 constitute an EGF-like domain; it reads NLDKCRMERCEGRGECYLPRPKTNPAIYNFACRCERPYFGKSCE. 3 disulfides stabilise this stretch: Cys362–Cys373, Cys367–Cys389, and Cys391–Cys400.

The protein belongs to the glycosyl hydrolase 56 family.

Functionally, endo-beta-galactosaminidase that specifically hydrolyzes chondroitin, releasing GlcUA-beta-(1-&gt;3)-GalNAc-beta-(1-&gt;4)-GlcUA-beta-(1-&gt;3)-GalNAc as the main product. Also hydrolyzes to a lesser extent chondroitin sulfates (CS-A, CS-C) and hyaluronic acid. May regulate the function of chondroitin in cell division. The chain is Chondroitin hydrolase from Caenorhabditis elegans.